The sequence spans 242 residues: 3-deoxy-manno-octulosonate cytidylyltransferase (242 aa).

The protein belongs to the KdsB family.

Its subcellular location is the cytoplasm. The enzyme catalyses 3-deoxy-alpha-D-manno-oct-2-ulosonate + CTP = CMP-3-deoxy-beta-D-manno-octulosonate + diphosphate. It participates in nucleotide-sugar biosynthesis; CMP-3-deoxy-D-manno-octulosonate biosynthesis; CMP-3-deoxy-D-manno-octulosonate from 3-deoxy-D-manno-octulosonate and CTP: step 1/1. Its pathway is bacterial outer membrane biogenesis; lipopolysaccharide biosynthesis. Its function is as follows. Activates KDO (a required 8-carbon sugar) for incorporation into bacterial lipopolysaccharide in Gram-negative bacteria. The chain is 3-deoxy-manno-octulosonate cytidylyltransferase from Mesorhizobium japonicum (strain LMG 29417 / CECT 9101 / MAFF 303099) (Mesorhizobium loti (strain MAFF 303099)).